A 204-amino-acid chain; its full sequence is Tetraspanin-13 (204 aa).

Residues 1–19 lie on the Cytoplasmic side of the membrane; the sequence is MVCGGFSCSKNCLCALNLL. The chain crosses the membrane as a helical span at residues 20 to 40; sequence YTLVSLLLIGIAAWGIGFGLI. The Extracellular portion of the chain corresponds to 41–44; that stretch reads SSLR. Residues 45 to 65 form a helical membrane-spanning segment; the sequence is VVGVVIAVGIFLFLIALVGLI. Topologically, residues 66–72 are cytoplasmic; the sequence is GAVKHHQ. Residues 73-93 traverse the membrane as a helical segment; it reads VLLFFYMIILLLVFIVQFSVS. The Extracellular portion of the chain corresponds to 94-167; sequence CACLALNREQ…IGEYAGEVLR (74 aa). 2 N-linked (GlcNAc...) asparagine glycosylation sites follow: Asn-113 and Asn-137. Ser-143 is modified (phosphoserine). Residues 168–188 traverse the membrane as a helical segment; it reads FVGGIGLFFSFTEILGVWLTY. Topologically, residues 189 to 204 are cytoplasmic; it reads RYRNQKDPRANPSAFL.

This sequence belongs to the tetraspanin (TM4SF) family.

It is found in the membrane. This is Tetraspanin-13 (Tspan13) from Mus musculus (Mouse).